The sequence spans 102 residues: Protein translation factor SUI1 homolog (102 aa).

The protein belongs to the SUI1 family.

The polypeptide is Protein translation factor SUI1 homolog (Nitrosopumilus maritimus (strain SCM1)).